The chain runs to 230 residues: Orotidine 5'-phosphate decarboxylase (230 aa).

Substrate-binding positions include Asp-10, Lys-32, 59-68, Thr-119, Arg-180, Gln-189, Gly-209, and Arg-210; that span reads DLKYHDIPNT. Lys-61 functions as the Proton donor in the catalytic mechanism.

It belongs to the OMP decarboxylase family. Type 1 subfamily. In terms of assembly, homodimer.

The enzyme catalyses orotidine 5'-phosphate + H(+) = UMP + CO2. It participates in pyrimidine metabolism; UMP biosynthesis via de novo pathway; UMP from orotate: step 2/2. Its function is as follows. Catalyzes the decarboxylation of orotidine 5'-monophosphate (OMP) to uridine 5'-monophosphate (UMP). The protein is Orotidine 5'-phosphate decarboxylase of Actinobacillus pleuropneumoniae serotype 5b (strain L20).